The sequence spans 377 residues: Guanine nucleotide-binding protein subunit beta (377 aa).

WD repeat units lie at residues 63-93, 105-135, 154-185, 202-233, 246-276, 293-323, and 339-369; these read GHTG…IVWN, LPCA…SIFN, GHKG…VLWD, GHTA…RLWD, GHES…RLFD, GDIP…YVWD, and SHEG…KIWA.

It belongs to the WD repeat G protein beta family. G proteins are composed of 3 units, alpha, beta and gamma.

Its function is as follows. Guanine nucleotide-binding proteins (G proteins) are involved as a modulator or transducer in various transmembrane signaling systems. The beta and gamma chains are required for the GTPase activity, for replacement of GDP by GTP, and for G protein-effector interaction. This Solanum tuberosum (Potato) protein is Guanine nucleotide-binding protein subunit beta (GB1).